The chain runs to 224 residues: Thiamine-phosphate synthase (224 aa).

Residues 44 to 48 (QFREK) and N79 contribute to the 4-amino-2-methyl-5-(diphosphooxymethyl)pyrimidine site. Positions 80 and 99 each coordinate Mg(2+). Position 117 (S117) interacts with 4-amino-2-methyl-5-(diphosphooxymethyl)pyrimidine. 143–145 (TST) provides a ligand contact to 2-[(2R,5Z)-2-carboxy-4-methylthiazol-5(2H)-ylidene]ethyl phosphate. 4-amino-2-methyl-5-(diphosphooxymethyl)pyrimidine is bound at residue K146. 2-[(2R,5Z)-2-carboxy-4-methylthiazol-5(2H)-ylidene]ethyl phosphate is bound by residues G175 and 195–196 (IS).

The protein belongs to the thiamine-phosphate synthase family. It depends on Mg(2+) as a cofactor.

It carries out the reaction 2-[(2R,5Z)-2-carboxy-4-methylthiazol-5(2H)-ylidene]ethyl phosphate + 4-amino-2-methyl-5-(diphosphooxymethyl)pyrimidine + 2 H(+) = thiamine phosphate + CO2 + diphosphate. The enzyme catalyses 2-(2-carboxy-4-methylthiazol-5-yl)ethyl phosphate + 4-amino-2-methyl-5-(diphosphooxymethyl)pyrimidine + 2 H(+) = thiamine phosphate + CO2 + diphosphate. The catalysed reaction is 4-methyl-5-(2-phosphooxyethyl)-thiazole + 4-amino-2-methyl-5-(diphosphooxymethyl)pyrimidine + H(+) = thiamine phosphate + diphosphate. The protein operates within cofactor biosynthesis; thiamine diphosphate biosynthesis; thiamine phosphate from 4-amino-2-methyl-5-diphosphomethylpyrimidine and 4-methyl-5-(2-phosphoethyl)-thiazole: step 1/1. Functionally, condenses 4-methyl-5-(beta-hydroxyethyl)thiazole monophosphate (THZ-P) and 2-methyl-4-amino-5-hydroxymethyl pyrimidine pyrophosphate (HMP-PP) to form thiamine monophosphate (TMP). The protein is Thiamine-phosphate synthase of Bacillus cereus (strain ATCC 10987 / NRS 248).